Consider the following 353-residue polypeptide: Rhodopsin (353 aa).

The Extracellular segment spans residues 1-36 (MNGTEGPFFYVPMVNTTGIVRSPYDYPQYYLVSPAA). 2 N-linked (GlcNAc...) asparagine glycosylation sites follow: asparagine 2 and asparagine 15. The chain crosses the membrane as a helical span at residues 37–61 (YAALGAYMFLLILLGFPINFLTLYV). The Cytoplasmic portion of the chain corresponds to 62–73 (TIEHKKLRTPLN). The chain crosses the membrane as a helical span at residues 74-96 (YILLNLAVADLFMVFGGFTTTMY). Over 97–110 (TSMHGYFVLGRLGC) the chain is Extracellular. The cysteines at positions 110 and 187 are disulfide-linked. Residues 111–133 (NMEGFFATLGGEIGLWSLVVLAV) traverse the membrane as a helical segment. Residues 134-136 (ERW) carry the 'Ionic lock' involved in activated form stabilization motif. Topologically, residues 134–152 (ERWLVVCKPISNFRFGENH) are cytoplasmic. A helical membrane pass occupies residues 153–173 (AIMGLAFTWVMACSCAVPPLV). Residues 174–202 (GWSRYIPEGMQCSCGVDYYTRAEGFNNES) lie on the Extracellular side of the membrane. Residue asparagine 200 is glycosylated (N-linked (GlcNAc...) asparagine). Residues 203-224 (FVIYMFACHFIIPMCVVFFCYG) traverse the membrane as a helical segment. The Cytoplasmic portion of the chain corresponds to 225 to 252 (RLLCAVKEAAAAQQESETTQRAEKEVTR). A helical membrane pass occupies residues 253-274 (MVVIMGIAFLICWCPYASVAWY). Over 275 to 286 (IFTHQGSEFGPV) the chain is Extracellular. A helical transmembrane segment spans residues 287 to 308 (FMTLPAFFAKTSSVYNPLIYIL). Lysine 296 is modified (N6-(retinylidene)lysine). The Cytoplasmic segment spans residues 309-353 (MNKQFRHCMITTLCCGKNPFEEEEGASTASKTEASSVSSSSVSPA). S-palmitoyl cysteine attachment occurs at residues cysteine 322 and cysteine 323. The segment at 331 to 353 (EEGASTASKTEASSVSSSSVSPA) is disordered. Residues 334 to 353 (ASTASKTEASSVSSSSVSPA) show a composition bias toward low complexity.

The protein belongs to the G-protein coupled receptor 1 family. Opsin subfamily. In terms of processing, phosphorylated on some or all of the serine and threonine residues present in the C-terminal region. Post-translationally, contains one covalently linked retinal chromophore.

The protein localises to the membrane. It is found in the cell projection. The protein resides in the cilium. Its subcellular location is the photoreceptor outer segment. Its function is as follows. Photoreceptor required for image-forming vision at low light intensity. While most salt water fish species use retinal as chromophore, most freshwater fish use 3-dehydroretinal, or a mixture of retinal and 3-dehydroretinal. Light-induced isomerization of 11-cis to all-trans retinal triggers a conformational change that activates signaling via G-proteins. Subsequent receptor phosphorylation mediates displacement of the bound G-protein alpha subunit by arrestin and terminates signaling. The chain is Rhodopsin (rho) from Dicentrarchus labrax (European seabass).